We begin with the raw amino-acid sequence, 242 residues long: MSGFFITATDTEVGKTVVAGAIAGVFRELGYNVGVYKPLQSGHVASNPEGDAARLKSLSGVPTQENEICPYSIEEPLAPRLAMKRAGRVVKLKEITDYYNGLLKEFNSLFVEGAGGLAVPYTEDALVIDFAKELQLPLIVVARPTLGTVNHTVLTIAYAKAHGLTVAGVILSGCKECEMERVQENKEMIEELSGVPVLGLLPFFAGEFTKEEVLESAKEHIMISKLEEFIQNESNVAGAPSM.

12 to 17 (EVGKTV) is an ATP binding site. A Mg(2+)-binding site is contributed by T16. Residue K37 is part of the active site. Residue S41 participates in substrate binding. ATP is bound by residues D51 and 112-115 (EGAG). Residues D51 and E112 each coordinate Mg(2+).

Belongs to the dethiobiotin synthetase family. In terms of assembly, homodimer. Mg(2+) is required as a cofactor.

The protein localises to the cytoplasm. The catalysed reaction is (7R,8S)-7,8-diammoniononanoate + CO2 + ATP = (4R,5S)-dethiobiotin + ADP + phosphate + 3 H(+). Its pathway is cofactor biosynthesis; biotin biosynthesis; biotin from 7,8-diaminononanoate: step 1/2. Its function is as follows. Catalyzes a mechanistically unusual reaction, the ATP-dependent insertion of CO2 between the N7 and N8 nitrogen atoms of 7,8-diaminopelargonic acid (DAPA, also called 7,8-diammoniononanoate) to form a ureido ring. The sequence is that of ATP-dependent dethiobiotin synthetase BioD from Bacillus cereus (strain ATCC 14579 / DSM 31 / CCUG 7414 / JCM 2152 / NBRC 15305 / NCIMB 9373 / NCTC 2599 / NRRL B-3711).